Here is a 453-residue protein sequence, read N- to C-terminus: Growth/differentiation factor 9 (453 aa).

Positions Met1 to Ser25 are cleaved as a signal peptide. Residues Gln26–Arg318 constitute a propeptide that is removed on maturation. 5 N-linked (GlcNAc...) asparagine glycosylation sites follow: Asn106, Asn163, Asn236, Asn255, and Asn269. The interval Ser281 to Ala300 is disordered. Asn337 carries an N-linked (GlcNAc...) asparagine glycan. Cystine bridges form between Cys352/Cys418, Cys381/Cys450, and Cys385/Cys452.

Belongs to the TGF-beta family. Homodimer or heterodimer (Potential). But, in contrast to other members of this family, cannot be disulfide-linked. In terms of processing, phosphorylated; phosphorylation is critical for GDF9 function.

Its subcellular location is the secreted. Its function is as follows. Required for ovarian folliculogenesis. This Bos taurus (Bovine) protein is Growth/differentiation factor 9 (GDF9).